The following is a 194-amino-acid chain: Imidazoleglycerol-phosphate dehydratase (194 aa).

Belongs to the imidazoleglycerol-phosphate dehydratase family.

It localises to the cytoplasm. The enzyme catalyses D-erythro-1-(imidazol-4-yl)glycerol 3-phosphate = 3-(imidazol-4-yl)-2-oxopropyl phosphate + H2O. It participates in amino-acid biosynthesis; L-histidine biosynthesis; L-histidine from 5-phospho-alpha-D-ribose 1-diphosphate: step 6/9. The chain is Imidazoleglycerol-phosphate dehydratase from Caldicellulosiruptor saccharolyticus (strain ATCC 43494 / DSM 8903 / Tp8T 6331).